Here is a 394-residue protein sequence, read N- to C-terminus: Enoyl-CoA delta isomerase 2 (394 aa).

A mitochondrion-targeting transit peptide spans 1-38; the sequence is MAMAYLAWRLARRSCPSSLQVTSFPVVQLHMNRTAMRA. The region spanning 39-124 is the ACB domain; it reads SQKDFENSMN…VSSLSPSLES (86 aa). The residue at position 51 (Lys-51) is an N6-acetyllysine; alternate. N6-succinyllysine; alternate is present on Lys-51. At Lys-55 the chain carries N6-succinyllysine. Lys-62 bears the N6-acetyllysine; alternate mark. An N6-succinyllysine; alternate modification is found at Lys-62. 66 to 70 contacts an acyl-CoA; the sequence is YALYK. N6-succinyllysine occurs at positions 70, 81, and 90. Residue Lys-92 is modified to N6-acetyllysine; alternate. Lys-92 carries the N6-succinyllysine; alternate modification. Residue Lys-92 coordinates an acyl-CoA. Ser-101 is subject to Phosphoserine. Position 111 (Tyr-111) interacts with an acyl-CoA. Ser-119 bears the Phosphoserine mark. The ECH-like stretch occupies residues 151–322; the sequence is TKIMFNRPKK…AQGLVTEVFP (172 aa). Lys-161 bears the N6-succinyllysine mark. 198–202 contributes to the substrate binding site; that stretch reads SGNDL. N6-succinyllysine is present on Lys-289. The Microbody targeting signal motif lies at 392–394; sequence SKL.

In the C-terminal section; belongs to the enoyl-CoA hydratase/isomerase family. In terms of tissue distribution, abundant in heart, skeletal muscle and liver. Expressed in CD34(+) T-cells and CD34(+) bone marrow cells.

The protein localises to the mitochondrion. It localises to the peroxisome matrix. The catalysed reaction is a (3Z)-enoyl-CoA = a 4-saturated (2E)-enoyl-CoA. It carries out the reaction (3Z)-octenoyl-CoA = (2E)-octenoyl-CoA. The enzyme catalyses a (3E)-enoyl-CoA = a 4-saturated (2E)-enoyl-CoA. It catalyses the reaction (2E)-tetradecenoyl-CoA = (3Z)-tetradecenoyl-CoA. The catalysed reaction is (3E)-tetradecenoyl-CoA = (2E)-tetradecenoyl-CoA. It carries out the reaction (3E)-octenoyl-CoA = (2E)-octenoyl-CoA. The enzyme catalyses (3E)-nonenoyl-CoA = (2E)-nonenoyl-CoA. It participates in lipid metabolism; fatty acid beta-oxidation. Functionally, able to isomerize both 3-cis and 3-trans double bonds into the 2-trans form in a range of enoyl-CoA species. Has a preference for 3-trans substrates. The protein is Enoyl-CoA delta isomerase 2 (ECI2) of Homo sapiens (Human).